Consider the following 177-residue polypeptide: Large ribosomal subunit protein uL6 (177 aa).

Belongs to the universal ribosomal protein uL6 family. In terms of assembly, part of the 50S ribosomal subunit.

Its function is as follows. This protein binds to the 23S rRNA, and is important in its secondary structure. It is located near the subunit interface in the base of the L7/L12 stalk, and near the tRNA binding site of the peptidyltransferase center. The chain is Large ribosomal subunit protein uL6 from Pseudomonas syringae pv. syringae (strain B728a).